The following is a 296-amino-acid chain: ATP phosphoribosyltransferase (296 aa).

This sequence belongs to the ATP phosphoribosyltransferase family. Long subfamily. Requires Mg(2+) as cofactor.

The protein localises to the cytoplasm. The catalysed reaction is 1-(5-phospho-beta-D-ribosyl)-ATP + diphosphate = 5-phospho-alpha-D-ribose 1-diphosphate + ATP. It functions in the pathway amino-acid biosynthesis; L-histidine biosynthesis; L-histidine from 5-phospho-alpha-D-ribose 1-diphosphate: step 1/9. Feedback inhibited by histidine. In terms of biological role, catalyzes the condensation of ATP and 5-phosphoribose 1-diphosphate to form N'-(5'-phosphoribosyl)-ATP (PR-ATP). Has a crucial role in the pathway because the rate of histidine biosynthesis seems to be controlled primarily by regulation of HisG enzymatic activity. This Halorubrum lacusprofundi (strain ATCC 49239 / DSM 5036 / JCM 8891 / ACAM 34) protein is ATP phosphoribosyltransferase.